The following is a 308-amino-acid chain: Cell division protein ZipA (308 aa).

Topologically, residues 1 to 5 (MQELR) are periplasmic. The helical transmembrane segment at 6–26 (LVLILVGALAIAALLFHGLWT) threads the bilayer. Residues 27 to 308 (SRKETSSKFG…YKQRVKVFCN (282 aa)) are Cytoplasmic-facing. Residues 43-90 (FDSESEDEQPTPARGFEQPKESVVDVRQERKEPAFGRDEPNLSQDPLF) form a disordered region. Basic and acidic residues predominate over residues 59 to 82 (EQPKESVVDVRQERKEPAFGRDEP).

It belongs to the ZipA family. In terms of assembly, interacts with FtsZ via their C-terminal domains.

It is found in the cell inner membrane. Functionally, essential cell division protein that stabilizes the FtsZ protofilaments by cross-linking them and that serves as a cytoplasmic membrane anchor for the Z ring. Also required for the recruitment to the septal ring of downstream cell division proteins. The polypeptide is Cell division protein ZipA (Aliivibrio salmonicida (strain LFI1238) (Vibrio salmonicida (strain LFI1238))).